We begin with the raw amino-acid sequence, 300 residues long: Protoheme IX farnesyltransferase (300 aa).

9 consecutive transmembrane segments (helical) span residues 24 to 44 (VTQL…PGMV), 48 to 68 (VLLG…AINC), 94 to 114 (LQIL…LYTF), 118 to 138 (LTMW…TLLL), 146 to 166 (IVIG…AVTG), 172 to 192 (AWIL…VLAL), 217 to 237 (LHIL…FISG), 239 to 259 (SGAV…AYAW), and 278 to 298 (IVYL…RPVI).

Belongs to the UbiA prenyltransferase family. Protoheme IX farnesyltransferase subfamily.

The protein resides in the cell inner membrane. It catalyses the reaction heme b + (2E,6E)-farnesyl diphosphate + H2O = Fe(II)-heme o + diphosphate. The protein operates within porphyrin-containing compound metabolism; heme O biosynthesis; heme O from protoheme: step 1/1. Converts heme B (protoheme IX) to heme O by substitution of the vinyl group on carbon 2 of heme B porphyrin ring with a hydroxyethyl farnesyl side group. The polypeptide is Protoheme IX farnesyltransferase (Burkholderia pseudomallei (strain 1106a)).